A 323-amino-acid polypeptide reads, in one-letter code: Small ribosomal subunit protein mS35 (323 aa).

Positions 31–59 are disordered; the sequence is PVPTPSLPERTPGNERPPRRKALPPRTEK. Residues 257-321 adopt a coiled-coil conformation; it reads SSERNILETL…YKESVKRLLN (65 aa).

Belongs to the mitochondrion-specific ribosomal protein mS35 family. In terms of assembly, component of the mitochondrial small ribosomal subunit (mt-SSU). Mature mammalian 55S mitochondrial ribosomes consist of a small (28S) and a large (39S) subunit. The 28S small subunit contains a 12S ribosomal RNA (12S mt-rRNA) and 30 different proteins. The 39S large subunit contains a 16S rRNA (16S mt-rRNA), a copy of mitochondrial valine transfer RNA (mt-tRNA(Val)), which plays an integral structural role, and 52 different proteins.

It is found in the mitochondrion. The polypeptide is Small ribosomal subunit protein mS35 (Homo sapiens (Human)).